We begin with the raw amino-acid sequence, 292 residues long: uncharacterized protein (292 aa).

It localises to the virion. This is an uncharacterized protein from Acanthamoeba polyphaga (Amoeba).